We begin with the raw amino-acid sequence, 521 residues long: Aldehyde dehydrogenase, mitochondrial (521 aa).

Residues 1–21 (MLRPAALAAARLVLRQGRRLL) constitute a mitochondrion transit peptide. The SIFI-degron signature appears at 13-28 (VLRQGRRLLSAAPTQA). An N6-acetyllysine mark is found at Lys-56, Lys-77, and Lys-163. An NAD(+)-binding site is contributed by 266 to 271 (GSTEVG). Glu-289 acts as the Proton acceptor in catalysis. The active-site Nucleophile is the Cys-323. An N6-acetyllysine mark is found at Lys-372, Lys-379, Lys-387, Lys-430, Lys-432, Lys-445, and Lys-455.

It belongs to the aldehyde dehydrogenase family. Homotetramer. In response to mitochondrial stress, the precursor protein is ubiquitinated by the SIFI complex in the cytoplasm before mitochondrial import, leading to its degradation. Within the SIFI complex, UBR4 initiates ubiquitin chain that are further elongated or branched by KCMF1.

The protein resides in the mitochondrion matrix. It catalyses the reaction an aldehyde + NAD(+) + H2O = a carboxylate + NADH + 2 H(+). It participates in alcohol metabolism; ethanol degradation; acetate from ethanol: step 2/2. Its function is as follows. Required for clearance of cellular formaldehyde, a cytotoxic and carcinogenic metabolite that induces DNA damage. This chain is Aldehyde dehydrogenase, mitochondrial (ALDH2), found in Sus scrofa (Pig).